Here is a 328-residue protein sequence, read N- to C-terminus: Lipoyl synthase (328 aa).

C56, C61, C67, C82, C86, C89, and S293 together coordinate [4Fe-4S] cluster. Positions 68-282 (WEDREATFLI…ERVGAELGFS (215 aa)) constitute a Radical SAM core domain.

The protein belongs to the radical SAM superfamily. Lipoyl synthase family. It depends on [4Fe-4S] cluster as a cofactor.

The protein resides in the cytoplasm. It carries out the reaction [[Fe-S] cluster scaffold protein carrying a second [4Fe-4S](2+) cluster] + N(6)-octanoyl-L-lysyl-[protein] + 2 oxidized [2Fe-2S]-[ferredoxin] + 2 S-adenosyl-L-methionine + 4 H(+) = [[Fe-S] cluster scaffold protein] + N(6)-[(R)-dihydrolipoyl]-L-lysyl-[protein] + 4 Fe(3+) + 2 hydrogen sulfide + 2 5'-deoxyadenosine + 2 L-methionine + 2 reduced [2Fe-2S]-[ferredoxin]. Its pathway is protein modification; protein lipoylation via endogenous pathway; protein N(6)-(lipoyl)lysine from octanoyl-[acyl-carrier-protein]: step 2/2. Its function is as follows. Catalyzes the radical-mediated insertion of two sulfur atoms into the C-6 and C-8 positions of the octanoyl moiety bound to the lipoyl domains of lipoate-dependent enzymes, thereby converting the octanoylated domains into lipoylated derivatives. This is Lipoyl synthase from Frankia alni (strain DSM 45986 / CECT 9034 / ACN14a).